Reading from the N-terminus, the 587-residue chain is Arginine--tRNA ligase (587 aa).

Residues 123–133 (ANVAKPLHVGH) carry the 'HIGH' region motif.

It belongs to the class-I aminoacyl-tRNA synthetase family. In terms of assembly, monomer.

The protein localises to the cytoplasm. It carries out the reaction tRNA(Arg) + L-arginine + ATP = L-arginyl-tRNA(Arg) + AMP + diphosphate. The chain is Arginine--tRNA ligase from Alkaliphilus oremlandii (strain OhILAs) (Clostridium oremlandii (strain OhILAs)).